The sequence spans 204 residues: MDPLSPPLCTLPPGPEPPRFVCYCEGEESGEGDRGGFNLYVTDAAELWSTCFTPDSLAALKARFGLSAAEDITPRFRAACEQQAVALTLQEDRASLTLSGGPSALAFDLSKVPGPEAAPRLRALTLGLAKRVWSLERRLAAAEETAVSPRKSPRPAGPQLFLPDPDPQRGGPGPGVRRRCPGESLINPGFKSKKPAGGVDFDET.

Residues 37 to 79 (FNLYVTDAAELWSTCFTPDSLAALKARFGLSAAEDITPRFRAA) enclose the PISA domain. At Ser-134 the chain carries Phosphoserine. The tract at residues 143–204 (EETAVSPRKS…PAGGVDFDET (62 aa)) is disordered. Thr-145 is subject to Phosphothreonine. A phosphoserine mark is found at Ser-148 and Ser-152. The segment at 171-204 (GPGPGVRRRCPGESLINPGFKSKKPAGGVDFDET) is mediates interaction with XRCC5/Ku80 and XRCC6/Ku70 and association with the non-homologous end joining core complex. Positions 190-204 (FKSKKPAGGVDFDET) match the XLM motif.

The protein belongs to the XRCC4-XLF family. PAXX subfamily. In terms of assembly, homodimer. Interacts with the DNA-bound XRCC5/Ku80 and XRCC6/Ku70 heterodimer (Ku complex); the interaction is direct. Associated component of the non-homologous end joining (NHEJ) complex, composed of the core proteins PRKDC, LIG4, XRCC4, XRCC6/Ku70, XRCC5/Ku86 and NHEJ1/XLF. Interacts with POLL (DNA polymerase lambda); promoting POLL recruitment to double-strand breaks (DSBs) and stimulation of the end-filling activity of POLL. Phosphorylation may inhibit interaction with the DNA-bound XRCC5/Ku80 and XRCC6/Ku70 heterodimer (Ku complex).

Its subcellular location is the nucleus. It is found in the chromosome. It localises to the cytoplasm. Its function is as follows. Non-essential DNA repair protein involved in DNA non-homologous end joining (NHEJ); participates in double-strand break (DSB) repair and V(D)J recombination. May act as a scaffold required for accumulation of the Ku heterodimer, composed of XRCC5/Ku80 and XRCC6/Ku70, at double-strand break sites and promote the assembly and/or stability of the NHEJ machinery. Involved in NHEJ by promoting the ligation of blunt-ended DNA ends. Together with NHEJ1/XLF, collaborates with DNA polymerase lambda (POLL) to promote joining of non-cohesive DNA ends. Constitutes a non-essential component of classical NHEJ: has a complementary but distinct function with NHEJ1/XLF in DNA repair. Able to restrict infection by herpesvirus 1 (HSV-1) via an unknown mechanism. The polypeptide is Protein PAXX (Homo sapiens (Human)).